The sequence spans 364 residues: Aminomethyltransferase (364 aa).

This sequence belongs to the GcvT family. The glycine cleavage system is composed of four proteins: P, T, L and H.

It carries out the reaction N(6)-[(R)-S(8)-aminomethyldihydrolipoyl]-L-lysyl-[protein] + (6S)-5,6,7,8-tetrahydrofolate = N(6)-[(R)-dihydrolipoyl]-L-lysyl-[protein] + (6R)-5,10-methylene-5,6,7,8-tetrahydrofolate + NH4(+). In terms of biological role, the glycine cleavage system catalyzes the degradation of glycine. This Thermotoga maritima (strain ATCC 43589 / DSM 3109 / JCM 10099 / NBRC 100826 / MSB8) protein is Aminomethyltransferase.